A 296-amino-acid polypeptide reads, in one-letter code: Cadherin-4 (296 aa).

Cadherin domains lie at 1-101 (NVPE…RPEF), 102-216 (INQV…PPEF), and 217-296 (TTST…MLTI). Residues 1–296 (NVPENSRGPF…ELNRAFMLTI (296 aa)) lie on the Extracellular side of the membrane. Asn-107 and Asn-236 each carry an N-linked (GlcNAc...) asparagine glycan.

The protein localises to the cell membrane. Functionally, cadherins are calcium-dependent cell adhesion proteins. They preferentially interact with themselves in a homophilic manner in connecting cells; cadherins may thus contribute to the sorting of heterogeneous cell types. May play an important role in retinal development. This chain is Cadherin-4 (Cdh4), found in Rattus norvegicus (Rat).